Reading from the N-terminus, the 206-residue chain is Large ribosomal subunit protein uL13w (206 aa).

It belongs to the universal ribosomal protein uL13 family.

In Arabidopsis thaliana (Mouse-ear cress), this protein is Large ribosomal subunit protein uL13w (RPL13AD).